The primary structure comprises 476 residues: Glycogen synthase (476 aa).

Lysine 15 contacts ADP-alpha-D-glucose.

Belongs to the glycosyltransferase 1 family. Bacterial/plant glycogen synthase subfamily.

The enzyme catalyses [(1-&gt;4)-alpha-D-glucosyl](n) + ADP-alpha-D-glucose = [(1-&gt;4)-alpha-D-glucosyl](n+1) + ADP + H(+). It functions in the pathway glycan biosynthesis; glycogen biosynthesis. In terms of biological role, synthesizes alpha-1,4-glucan chains using ADP-glucose. The protein is Glycogen synthase of Bacillus anthracis.